The primary structure comprises 207 residues: uncharacterized protein (207 aa).

The next 5 helical transmembrane spans lie at 28–48, 59–79, 112–132, 140–160, and 165–185; these read IAVLLPLIEAFLPFLPLIVFV, EGFILSWAGSTAGSILVFLIV, MFLLLCFPFTPSAAVNVVAGL, FILAAASGKLVMIFMISFIGY, and LITQPIRTVIAVLVITVLWYV.

Its subcellular location is the cell membrane. This is an uncharacterized protein from Bacillus subtilis (strain 168).